Reading from the N-terminus, the 338-residue chain is Tryptophan--tRNA ligase (338 aa).

Residues 18 to 20 and 26 to 27 each bind ATP; these read QPS and GN. The 'HIGH' region motif lies at 19-27; it reads PSGNLTIGN. Aspartate 142 contacts L-tryptophan. ATP is bound by residues 154 to 156, isoleucine 193, and 202 to 206; these read GND and KMSKS. The 'KMSKS' region motif lies at 202-206; the sequence is KMSKS.

It belongs to the class-I aminoacyl-tRNA synthetase family. Homodimer.

It is found in the cytoplasm. The enzyme catalyses tRNA(Trp) + L-tryptophan + ATP = L-tryptophyl-tRNA(Trp) + AMP + diphosphate + H(+). Catalyzes the attachment of tryptophan to tRNA(Trp). In Clostridium tetani (strain Massachusetts / E88), this protein is Tryptophan--tRNA ligase.